The following is a 115-amino-acid chain: Large ribosomal subunit protein bL19 (115 aa).

Belongs to the bacterial ribosomal protein bL19 family.

In terms of biological role, this protein is located at the 30S-50S ribosomal subunit interface and may play a role in the structure and function of the aminoacyl-tRNA binding site. In Francisella philomiragia subsp. philomiragia (strain ATCC 25017 / CCUG 19701 / FSC 153 / O#319-036), this protein is Large ribosomal subunit protein bL19.